The primary structure comprises 617 residues: Tetratricopeptide repeat protein 39B (617 aa).

TPR repeat units follow at residues 328–361 (SLIL…QEEW) and 561–594 (PFTL…YKDY).

It belongs to the TTC39 family.

In terms of biological role, regulates high density lipoprotein (HDL) cholesterol metabolism by promoting the ubiquitination and degradation of the oxysterols receptors LXR (NR1H2 and NR1H3). In Rattus norvegicus (Rat), this protein is Tetratricopeptide repeat protein 39B (Ttc39b).